A 346-amino-acid polypeptide reads, in one-letter code: Dihydroorotase (346 aa).

Zn(2+) is bound by residues H17 and H19. Residues 19 to 21 and N45 contribute to the substrate site; that span reads HVR. Zn(2+)-binding residues include K102, H139, and H177. Residue K102 is modified to N6-carboxylysine. Substrate is bound at residue H139. A substrate-binding site is contributed by L222. D250 provides a ligand contact to Zn(2+). Residue D250 is part of the active site. H254 and A266 together coordinate substrate.

This sequence belongs to the metallo-dependent hydrolases superfamily. DHOase family. Class II DHOase subfamily. In terms of assembly, homodimer. Zn(2+) serves as cofactor.

It catalyses the reaction (S)-dihydroorotate + H2O = N-carbamoyl-L-aspartate + H(+). Its pathway is pyrimidine metabolism; UMP biosynthesis via de novo pathway; (S)-dihydroorotate from bicarbonate: step 3/3. In terms of biological role, catalyzes the reversible cyclization of carbamoyl aspartate to dihydroorotate. This is Dihydroorotase from Delftia acidovorans (strain DSM 14801 / SPH-1).